We begin with the raw amino-acid sequence, 207 residues long: Outer-membrane lipoprotein LolB (207 aa).

The signal sequence occupies residues 1 to 21 (MPLPDFRLIRLLPLAALVLTA). Cys22 carries N-palmitoyl cysteine lipidation. Cys22 carries the S-diacylglycerol cysteine lipid modification.

The protein belongs to the LolB family. In terms of assembly, monomer.

The protein localises to the cell outer membrane. Its function is as follows. Plays a critical role in the incorporation of lipoproteins in the outer membrane after they are released by the LolA protein. This chain is Outer-membrane lipoprotein LolB, found in Shigella boydii serotype 18 (strain CDC 3083-94 / BS512).